The primary structure comprises 155 residues: MYQKLQAPTLSSKEAAIQLLSRRDHGQYELYQKLALKGYEEADIEAAINFCLDHNYLDDLRYAKSQVRQHVYKGHGERRIRQELKQKRVAESIIDMAMAEEPQDWFELARMAAEKKFKGIKAKDQKEYAKQVRFLQYRGYSFDQISYALSFEDED.

This sequence belongs to the RecX family.

The protein resides in the cytoplasm. In terms of biological role, modulates RecA activity. This chain is Regulatory protein RecX, found in Vibrio campbellii (strain ATCC BAA-1116).